The following is a 556-amino-acid chain: MLPRAVVLLSLTPFFAQAACPDWPVPRATDEITALQQQLQRWDSSYYRDGRSLVADELYDQARQRLLTWRQCFPQAPRAMDQPLLGAGGSIRHPIPHTGVEKLADANAVTGWLKGRDDIWAQPKVDGVAVTLIYHRGQFQQALSRGDGVHGHDWTRAAWQIEAIPKRLPRPVDLLLQGELYLRLEQHVQARSGSLKARNRVAGWMARKQLTAAEAAQIGLFVWDWPQGPATLSERLEQLADLGFAEPREYSRPVGGFADAQQWRARWYRSPLPFASDGIILRQSRRPAAERWQAKAPYWIAAWKYPYAQVLASVRQVDFRIGRTGRITPLLEIEPVTLDDRQIRRVSLGSLQRWRSLDIVPGDQVAISLAGLSIPRLDEVVLRSTLRQSIQPPREADFHFLSCWQPSPGCEEQFLARLTWLSSKQGLNLQNIGSRTWARLVETGRIKGLLDWLTLDQAELANIAGFGDRSSKRLLESLHSARQQPFPRWLKALGIPPSGSADLSGPWQALAMKNSLDWQNEAGIGAERAAQLVAFFRAPEVLALQGALNSAGIEGF.

Lys-124 functions as the N6-AMP-lysine intermediate in the catalytic mechanism.

It belongs to the NAD-dependent DNA ligase family. LigB subfamily.

It carries out the reaction NAD(+) + (deoxyribonucleotide)n-3'-hydroxyl + 5'-phospho-(deoxyribonucleotide)m = (deoxyribonucleotide)n+m + AMP + beta-nicotinamide D-nucleotide.. In terms of biological role, catalyzes the formation of phosphodiester linkages between 5'-phosphoryl and 3'-hydroxyl groups in double-stranded DNA using NAD as a coenzyme and as the energy source for the reaction. The protein is DNA ligase B of Pseudomonas fluorescens (strain ATCC BAA-477 / NRRL B-23932 / Pf-5).